A 306-amino-acid polypeptide reads, in one-letter code: Serine/threonine-protein kinase csk1 (306 aa).

Positions 11-306 constitute a Protein kinase domain; it reads LTDIRHLTDG…KVSARLSQYA (296 aa). ATP is bound by residues 17–25 and Lys-40; that span reads LTDGTISEV. Asp-129 serves as the catalytic Proton acceptor.

Belongs to the protein kinase superfamily. CMGC Ser/Thr protein kinase family. CDC2/CDKX subfamily.

It carries out the reaction L-seryl-[protein] + ATP = O-phospho-L-seryl-[protein] + ADP + H(+). The enzyme catalyses L-threonyl-[protein] + ATP = O-phospho-L-threonyl-[protein] + ADP + H(+). Functionally, acts as a CAK-activating kinase that specifically activates crk1 of the crk1-mcs2 CAK complex. This chain is Serine/threonine-protein kinase csk1 (csk1), found in Schizosaccharomyces pombe (strain 972 / ATCC 24843) (Fission yeast).